We begin with the raw amino-acid sequence, 318 residues long: MAPWAAAQLWALNPLRALWLTLAAAFLLTLLLQLVPPGLLPGCALFQDLIRYGKTKREGQSRPAVCRVFDVPKRYFSHFYIISALWNGFLLWHLTQSVFLGVPFPNWLHGLLRILGASQFQGGELALSAFLVLVFLWLHSLRRLFECFYVSVFSNTVIHIVQYCFGLVYYVLTGLTVLSQVPMDGRNAYVIGKNLLMQARWFHILGMLMFIWSSVHQYKCHVILGNLRKNKAGVVIHCNHRIPFGDWFEYVSSPNYLAELMIYISMAVTFGFHNLTWWLVVTYVFFSQALSAFLSHKFYKSKFVSYPKHRKAFLPFLF.

Residues methionine 1–tryptophan 19 are Cytoplasmic-facing. The helical transmembrane segment at leucine 20–leucine 40 threads the bilayer. Residues proline 41 to tyrosine 80 are Lumenal-facing. The chain crosses the membrane as a helical span at residues isoleucine 81–glycine 101. Residues valine 102–glutamine 119 lie on the Cytoplasmic side of the membrane. The helical transmembrane segment at phenylalanine 120–serine 140 threads the bilayer. Over leucine 141–threonine 156 the chain is Lumenal. The chain crosses the membrane as a helical span at residues valine 157–valine 177. The Cytoplasmic segment spans residues leucine 178–asparagine 194. A helical membrane pass occupies residues leucine 195 to valine 215. Topologically, residues histidine 216–serine 265 are lumenal. A helical membrane pass occupies residues methionine 266–phenylalanine 286. Over serine 287–phenylalanine 318 the chain is Cytoplasmic.

This sequence belongs to the steroid 5-alpha reductase family. Polyprenal reductase subfamily.

The protein resides in the endoplasmic reticulum membrane. The catalysed reaction is a di-trans,poly-cis-dolichal + NADP(+) = a di-trans,poly-cis-polyprenal + NADPH + H(+). It carries out the reaction a 3-oxo-5alpha-steroid + NADP(+) = a 3-oxo-Delta(4)-steroid + NADPH + H(+). It catalyses the reaction androst-4-ene-3,17-dione + NADPH + H(+) = 5alpha-androstan-3,17-dione + NADP(+). The enzyme catalyses 17beta-hydroxy-5alpha-androstan-3-one + NADP(+) = testosterone + NADPH + H(+). It participates in protein modification; protein glycosylation. Plays a key role in early steps of protein N-linked glycosylation by being involved in the conversion of polyprenol into dolichol. Acts as a polyprenal reductase that mediates the reduction of polyprenal into dolichal in a NADP-dependent mechanism. Dolichols are required for the synthesis of dolichol-linked monosaccharides and the oligosaccharide precursor used for N-glycosylation. Also able to convert testosterone (T) into 5-alpha-dihydrotestosterone (DHT). The chain is Polyprenal reductase (SRD5A3) from Ailuropoda melanoleuca (Giant panda).